Consider the following 288-residue polypeptide: Acetylglutamate kinase (288 aa).

Substrate is bound by residues 73–74 (GG), R95, and N186.

The protein belongs to the acetylglutamate kinase family. ArgB subfamily.

The protein resides in the cytoplasm. The enzyme catalyses N-acetyl-L-glutamate + ATP = N-acetyl-L-glutamyl 5-phosphate + ADP. It participates in amino-acid biosynthesis; L-arginine biosynthesis; N(2)-acetyl-L-ornithine from L-glutamate: step 2/4. Its function is as follows. Catalyzes the ATP-dependent phosphorylation of N-acetyl-L-glutamate. The chain is Acetylglutamate kinase from Pelagibacter ubique (strain HTCC1062).